Reading from the N-terminus, the 486-residue chain is UDP-N-acetylmuramate--L-alanine ligase (486 aa).

132-138 is a binding site for ATP; sequence GTHGKTT.

This sequence belongs to the MurCDEF family.

Its subcellular location is the cytoplasm. The enzyme catalyses UDP-N-acetyl-alpha-D-muramate + L-alanine + ATP = UDP-N-acetyl-alpha-D-muramoyl-L-alanine + ADP + phosphate + H(+). The protein operates within cell wall biogenesis; peptidoglycan biosynthesis. Functionally, cell wall formation. The chain is UDP-N-acetylmuramate--L-alanine ligase from Halorhodospira halophila (strain DSM 244 / SL1) (Ectothiorhodospira halophila (strain DSM 244 / SL1)).